The chain runs to 90 residues: uncharacterized protein (90 aa).

This is an uncharacterized protein from Mycobacterium tuberculosis (strain ATCC 25618 / H37Rv).